Consider the following 95-residue polypeptide: uncharacterized protein (95 aa).

Low complexity predominate over residues 1-12 (MQNFMNNLSGGS). Residues 1-27 (MQNFMNNLSGGSNKEGGEKSNDFLSSA) form a disordered region.

This is an uncharacterized protein from Schizosaccharomyces pombe (strain 972 / ATCC 24843) (Fission yeast).